The primary structure comprises 273 residues: Large ribosomal subunit protein uL2cz/uL2cy (273 aa).

2 disordered regions span residues 1–23 and 224–273; these read MAIHLYKTSTSSTRNGAVDSQVK and NPVD…RRRK. Over residues 262-273 the composition is skewed to basic and acidic residues; that stretch reads KYSDRFILRRRK.

The protein belongs to the universal ribosomal protein uL2 family. In terms of assembly, part of the 50S ribosomal subunit.

The protein localises to the plastid. Its subcellular location is the chloroplast. The protein is Large ribosomal subunit protein uL2cz/uL2cy (rpl2-A) of Acorus calamus var. americanus (American sweet flag).